Here is a 91-residue protein sequence, read N- to C-terminus: DNA-directed RNA polymerase subunit omega (91 aa).

This sequence belongs to the RNA polymerase subunit omega family. The RNAP catalytic core consists of 2 alpha, 1 beta, 1 beta' and 1 omega subunit. When a sigma factor is associated with the core the holoenzyme is formed, which can initiate transcription.

The catalysed reaction is RNA(n) + a ribonucleoside 5'-triphosphate = RNA(n+1) + diphosphate. Functionally, promotes RNA polymerase assembly. Latches the N- and C-terminal regions of the beta' subunit thereby facilitating its interaction with the beta and alpha subunits. This is DNA-directed RNA polymerase subunit omega from Shigella flexneri.